Reading from the N-terminus, the 481-residue chain is Bindin (481 aa).

The N-terminal stretch at methionine 1–alanine 20 is a signal peptide. The propeptide occupies glutamate 21 to arginine 245. Basic and acidic residues-rich tracts occupy residues aspartate 154–serine 163 and arginine 178–lysine 189. Disordered regions lie at residues aspartate 154 to proline 193 and glycine 219 to lysine 243. The tract at residues leucine 352–asparagine 360 is fucose-binding domain. The segment at serine 376–glycine 481 is disordered. Residues glutamine 379 to alanine 389 show a composition bias toward acidic residues. Positions alanine 406–alanine 416 are enriched in gly residues. 2 stretches are compositionally biased toward low complexity: residues methionine 417–proline 440 and glycine 464–glycine 481.

It belongs to the bindin family.

The protein resides in the cytoplasmic vesicle. The protein localises to the secretory vesicle. It localises to the acrosome lumen. In terms of biological role, species-specific sea urchin sperm protein required for adhesion of sperm to the egg surface during fertilization. Bindin coats the acrosomal process after it is externalized by the acrosome reaction. It binds to sulfated, fucose-containing polysaccharides on the vitelline layer receptor proteoglycans which cover the egg plasma membrane. The sequence is that of Bindin from Strongylocentrotus purpuratus (Purple sea urchin).